A 240-amino-acid polypeptide reads, in one-letter code: (DL)-glycerol-3-phosphatase 2 (240 aa).

Residue D20 is the Nucleophile of the active site. Positions 20, 22, and 185 each coordinate Mg(2+). D22 functions as the Proton donor in the catalytic mechanism.

Belongs to the HAD-like hydrolase superfamily. DOG/GPP family. Requires Mg(2+) as cofactor. Ubiquitous with highest expression in siliques. Mainly restricted to the meristem of immature flower and vascular elements of the root, shoot, leave, siliqua and developing embryo (at the protein level).

Its subcellular location is the cytoplasm. The catalysed reaction is sn-glycerol 1-phosphate + H2O = glycerol + phosphate. The enzyme catalyses sn-glycerol 3-phosphate + H2O = glycerol + phosphate. Functionally, acts as a glycerol-3-phosphatase with higher stereospecificity for L-glycerol-3-phosphate than DL-glycerol-3-phosphate. The protein is (DL)-glycerol-3-phosphatase 2 (GPP2) of Arabidopsis thaliana (Mouse-ear cress).